Here is a 413-residue protein sequence, read N- to C-terminus: Serpin A12 (413 aa).

The first 20 residues, 1–20 (MTRMLDLGLFLAGLLTVKGL), serve as a signal peptide directing secretion. Residues Asn-92 and Asn-267 are each glycosylated (N-linked (GlcNAc...) asparagine). Residues 364 to 382 (GMEGAAGSGAQTLPMETPR) are reactive center loop.

The protein belongs to the serpin family. Forms a stable complex with KLK7. Glycosylation slightly decreases affinity for heparin, but otherwise has no significant effect on KLK7 inhibitory activity or thermal stability of the protein. Expressed in visceral adipose tissues.

The protein resides in the secreted. Its activity is regulated as follows. Inhibition of KLK7 is enhanced by heparin. Its function is as follows. Adipokine that modulates insulin action by specifically inhibiting its target protease KLK7 in white adipose tissues. The protein is Serpin A12 (Serpina12) of Mus musculus (Mouse).